The primary structure comprises 270 residues: Putative phosphoenolpyruvate synthase regulatory protein (270 aa).

150 to 157 lines the ADP pocket; it reads GVSRCGKT.

Belongs to the pyruvate, phosphate/water dikinase regulatory protein family. PSRP subfamily.

It catalyses the reaction [pyruvate, water dikinase] + ADP = [pyruvate, water dikinase]-phosphate + AMP + H(+). The enzyme catalyses [pyruvate, water dikinase]-phosphate + phosphate + H(+) = [pyruvate, water dikinase] + diphosphate. Functionally, bifunctional serine/threonine kinase and phosphorylase involved in the regulation of the phosphoenolpyruvate synthase (PEPS) by catalyzing its phosphorylation/dephosphorylation. This is Putative phosphoenolpyruvate synthase regulatory protein from Shewanella baltica (strain OS223).